The sequence spans 64 residues: Small ribosomal subunit protein bS21 (64 aa).

Positions 40–64 are disordered; it reads PPSVKRKIKSQEAQRRMRRTKRKRF. Residues 55–64 are compositionally biased toward basic residues; the sequence is RMRRTKRKRF.

Belongs to the bacterial ribosomal protein bS21 family.

This Elusimicrobium minutum (strain Pei191) protein is Small ribosomal subunit protein bS21.